The sequence spans 380 residues: Crotonobetainyl-CoA reductase (380 aa).

This sequence belongs to the acyl-CoA dehydrogenase family. In terms of assembly, homotetramer. FAD is required as a cofactor.

The protein localises to the cytoplasm. The enzyme catalyses 4-(trimethylamino)butanoyl-CoA + oxidized [electron-transfer flavoprotein] + H(+) = crotonobetainyl-CoA + reduced [electron-transfer flavoprotein]. The protein operates within amine and polyamine metabolism; carnitine metabolism. Its function is as follows. Catalyzes the reduction of crotonobetainyl-CoA to gamma-butyrobetainyl-CoA. This is Crotonobetainyl-CoA reductase from Proteus sp. (strain LE138).